The primary structure comprises 121 residues: MARIAGIDIPREKRVEIALTYVYGIGLTRSKLILANTGVNPDTRVKDLSDGDVQKLRGATEEFTLEGDLRRKEGMALKRLQDIGCVRGRRHRMSLPVRGQRTRTNARTRRGSRKTVAGRKK.

The tract at residues His-91 to Lys-121 is disordered. Residues Gln-100–Lys-121 show a composition bias toward basic residues.

Belongs to the universal ribosomal protein uS13 family. As to quaternary structure, part of the 30S ribosomal subunit. Forms a loose heterodimer with protein S19. Forms two bridges to the 50S subunit in the 70S ribosome.

Located at the top of the head of the 30S subunit, it contacts several helices of the 16S rRNA. In the 70S ribosome it contacts the 23S rRNA (bridge B1a) and protein L5 of the 50S subunit (bridge B1b), connecting the 2 subunits; these bridges are implicated in subunit movement. Contacts the tRNAs in the A and P-sites. The sequence is that of Small ribosomal subunit protein uS13 from Prochlorococcus marinus (strain AS9601).